Consider the following 61-residue polypeptide: Small ribosomal subunit protein uS14 (61 aa).

Zn(2+)-binding residues include C24, C27, C40, and C43.

It belongs to the universal ribosomal protein uS14 family. Zinc-binding uS14 subfamily. In terms of assembly, part of the 30S ribosomal subunit. Contacts proteins S3 and S10. Zn(2+) serves as cofactor.

In terms of biological role, binds 16S rRNA, required for the assembly of 30S particles and may also be responsible for determining the conformation of the 16S rRNA at the A site. The polypeptide is Small ribosomal subunit protein uS14 (Herpetosiphon aurantiacus (strain ATCC 23779 / DSM 785 / 114-95)).